Reading from the N-terminus, the 131-residue chain is Small ribosomal subunit protein uS8 (131 aa).

Belongs to the universal ribosomal protein uS8 family. Part of the 30S ribosomal subunit. Contacts proteins S5 and S12.

Functionally, one of the primary rRNA binding proteins, it binds directly to 16S rRNA central domain where it helps coordinate assembly of the platform of the 30S subunit. This is Small ribosomal subunit protein uS8 from Wolbachia pipientis wMel.